We begin with the raw amino-acid sequence, 177 residues long: MATIVRQKGLAPIEETSEVKSFLKERGIDYDHWKVPYNAADLTDKEILADVEKEELLKKLDDRFETLKEKEGYQSRDLIVLHPNVSGLNDMLAKFDRVHYHTDEEVRYIVDGSGVFGFVLKGEKFLVHVVKDDFISVPRNTNHWFYLDDKKRIKAVRYFRDMSGWVPNYVEETNSLD.

Fe(2+)-binding residues include His-99, His-101, Glu-105, and His-143. His-99, His-101, Glu-105, and His-143 together coordinate Ni(2+).

This sequence belongs to the acireductone dioxygenase (ARD) family. In terms of assembly, monomer. Requires Fe(2+) as cofactor. It depends on Ni(2+) as a cofactor.

It carries out the reaction 1,2-dihydroxy-5-(methylsulfanyl)pent-1-en-3-one + O2 = 3-(methylsulfanyl)propanoate + CO + formate + 2 H(+). The enzyme catalyses 1,2-dihydroxy-5-(methylsulfanyl)pent-1-en-3-one + O2 = 4-methylsulfanyl-2-oxobutanoate + formate + 2 H(+). It functions in the pathway amino-acid biosynthesis; L-methionine biosynthesis via salvage pathway; L-methionine from S-methyl-5-thio-alpha-D-ribose 1-phosphate: step 5/6. Functionally, catalyzes 2 different reactions between oxygen and the acireductone 1,2-dihydroxy-3-keto-5-methylthiopentene (DHK-MTPene) depending upon the metal bound in the active site. Fe-containing acireductone dioxygenase (Fe-ARD) produces formate and 2-keto-4-methylthiobutyrate (KMTB), the alpha-ketoacid precursor of methionine in the methionine recycle pathway. Ni-containing acireductone dioxygenase (Ni-ARD) produces methylthiopropionate, carbon monoxide and formate, and does not lie on the methionine recycle pathway. This is Acireductone dioxygenase from Leptospira borgpetersenii serovar Hardjo-bovis (strain L550).